The primary structure comprises 350 residues: Phenylalanine--tRNA ligase alpha subunit (350 aa).

Glu259 serves as a coordination point for Mg(2+).

It belongs to the class-II aminoacyl-tRNA synthetase family. Phe-tRNA synthetase alpha subunit type 1 subfamily. Tetramer of two alpha and two beta subunits. It depends on Mg(2+) as a cofactor.

It is found in the cytoplasm. It carries out the reaction tRNA(Phe) + L-phenylalanine + ATP = L-phenylalanyl-tRNA(Phe) + AMP + diphosphate + H(+). The protein is Phenylalanine--tRNA ligase alpha subunit of Rickettsia typhi (strain ATCC VR-144 / Wilmington).